A 165-amino-acid polypeptide reads, in one-letter code: UPF0254 protein MmarC7_0182 (165 aa).

This sequence belongs to the UPF0254 family.

This is UPF0254 protein MmarC7_0182 from Methanococcus maripaludis (strain C7 / ATCC BAA-1331).